Reading from the N-terminus, the 191-residue chain is Peptidyl-tRNA hydrolase (191 aa).

Tyr14 lines the tRNA pocket. The active-site Proton acceptor is the His19. Phe64, Asn66, and Asn112 together coordinate tRNA.

Belongs to the PTH family. In terms of assembly, monomer.

It localises to the cytoplasm. It carries out the reaction an N-acyl-L-alpha-aminoacyl-tRNA + H2O = an N-acyl-L-amino acid + a tRNA + H(+). Hydrolyzes ribosome-free peptidyl-tRNAs (with 1 or more amino acids incorporated), which drop off the ribosome during protein synthesis, or as a result of ribosome stalling. Its function is as follows. Catalyzes the release of premature peptidyl moieties from peptidyl-tRNA molecules trapped in stalled 50S ribosomal subunits, and thus maintains levels of free tRNAs and 50S ribosomes. The polypeptide is Peptidyl-tRNA hydrolase (Novosphingobium aromaticivorans (strain ATCC 700278 / DSM 12444 / CCUG 56034 / CIP 105152 / NBRC 16084 / F199)).